The sequence spans 27 residues: Delta-conotoxin TsVIA (27 aa).

Disulfide bonds link C1/C17, C8/C21, and C16/C25.

This sequence belongs to the conotoxin O1 superfamily. Expressed by the venom duct.

The protein localises to the secreted. Functionally, delta-conotoxins bind to site 6 of voltage-gated sodium channels (Nav) and inhibit the inactivation process. This toxin inhibits tetrodotoxin(TTX)-sensitive sodium channels. A test on mouse Nav1.6/SCN8A confirms this sensitivity. This chain is Delta-conotoxin TsVIA, found in Conus tessulatus (Tessellate cone).